Consider the following 399-residue polypeptide: Nicotinate phosphoribosyltransferase (399 aa).

His-217 carries the phosphohistidine; by autocatalysis modification.

This sequence belongs to the NAPRTase family. Post-translationally, transiently phosphorylated on a His residue during the reaction cycle. Phosphorylation strongly increases the affinity for substrates and increases the rate of nicotinate D-ribonucleotide production. Dephosphorylation regenerates the low-affinity form of the enzyme, leading to product release.

It catalyses the reaction nicotinate + 5-phospho-alpha-D-ribose 1-diphosphate + ATP + H2O = nicotinate beta-D-ribonucleotide + ADP + phosphate + diphosphate. Its pathway is cofactor biosynthesis; NAD(+) biosynthesis; nicotinate D-ribonucleotide from nicotinate: step 1/1. Its function is as follows. Catalyzes the synthesis of beta-nicotinate D-ribonucleotide from nicotinate and 5-phospho-D-ribose 1-phosphate at the expense of ATP. This is Nicotinate phosphoribosyltransferase from Burkholderia mallei (strain ATCC 23344).